A 173-amino-acid chain; its full sequence is MKKLLPLAVLAALSSVHVASAQAADVSAAVGATGQSGMTYRLGLSWDWDKSWWQTSTGRLTGYWDAGYTYWEGGDEGAGKHSLSFAPVFVYEFAGDSIKPFIEAGIGVAAFSGTRVGDQNLGSSLNFEDRIGAGLKFANGQSVGVRAIHYSNAGLKQPNDGIESYSLFYKIPI.

The N-terminal stretch at 1–23 (MKKLLPLAVLAALSSVHVASAQA) is a signal peptide. Over 25–28 (DVSA) the chain is Periplasmic. A beta stranded membrane pass occupies residues 29–32 (AVGA). Thr-33 is a topological domain (periplasmic). The chain crosses the membrane as a beta stranded span at residues 34–49 (GQSGMTYRLGLSWDWD). The Extracellular segment spans residues 50–56 (KSWWQTS). The chain crosses the membrane as a beta stranded span at residues 57-71 (TGRLTGYWDAGYTYW). At 72–73 (EG) the chain is on the periplasmic side. A beta stranded transmembrane segment spans residues 74–89 (GDEGAGKHSLSFAPVF). A topological domain (extracellular) is located at residue Val-90. The chain crosses the membrane as a beta stranded span at residues 91–93 (YEF). Residues 94 to 95 (AG) lie on the Periplasmic side of the membrane. Residues 96–98 (DSI) form a beta stranded membrane-spanning segment. The Extracellular portion of the chain corresponds to 99 to 100 (KP). Residues 101 to 115 (FIEAGIGVAAFSGTR) traverse the membrane as a beta stranded segment. At 116-117 (VG) the chain is on the periplasmic side. The beta stranded transmembrane segment at 118–128 (DQNLGSSLNFE) threads the bilayer. The Extracellular portion of the chain corresponds to 129-138 (DRIGAGLKFA). Residues 139–148 (NGQSVGVRAI) form a beta stranded membrane-spanning segment. Residues His-149, Ser-151, and Glu-163 each act as charge relay system in the active site. Residues 149-173 (HYSNAGLKQPNDGIESYSLFYKIPI) are Periplasmic-facing.

This sequence belongs to the PagL family. As to quaternary structure, homodimer.

The protein localises to the cell outer membrane. It catalyses the reaction a 3-(acyloxy)acyl derivative of bacterial toxin + H2O = a 3-hydroxyacyl derivative of bacterial toxin + a fatty acid + H(+). Its activity is regulated as follows. Decreased activity at low temperatures (15 or 21 degrees Celsius). Has lipid A 3-O-deacylase activity. Hydrolyzes the ester bond at the 3 position of lipid A, a bioactive component of lipopolysaccharide (LPS), thereby releasing the primary fatty acyl moiety. Lacks fatty acyl chain-length specificity as removes both 3-OH C10 and 3-OH C14 fatty acids from lipid A. The polypeptide is Lipid A deacylase PagL (Pseudomonas aeruginosa (strain ATCC 15692 / DSM 22644 / CIP 104116 / JCM 14847 / LMG 12228 / 1C / PRS 101 / PAO1)).